The following is a 592-amino-acid chain: MTCWLCVLSLPLLLLPAAPPPAGGCPARCECTVQTRAVACTRRRLTAVPDGIPAETRLLELSRNRIRCLNPGDLAALPALEELDLSENAIAHVEPGAFANLPRLRVLRLRGNQLKLIPPGVFTRLDNLTLLDLSENKLVILLDYTFQDLHSLRRLEVGDNDLVFVSRRAFAGLLALEELTLERCNLTALSGESLGHLRSLGALRLRHLAIASLEDQNFRRLPGLLHLEIDNWPLLEEVAAGSLRGLNLTSLSVTHTNITAVPAAALRHQAHLTCLNLSHNPISTVPRGSFRDLVRLRELHLAGALLAVVEPQAFLGLRQIRLLNLSNNLLSTLEESTFHSVNTLETLRVDGNPLACDCRLLWIVQRRKTLNFDGRLPACATPAEVRGDALRNLPDSVLFEYFVCRKPKIRERRLQRVTATAGEDVRFLCRAEGEPAPTVAWVTPQHRPVTATSAGRARVLPGGTLEIQDARPQDSGTYTCVASNAGGNDTYFATLTVRPEPAANRTPGEAHNETLAALRAPLDLTTILVSTAMGCITFLGVVLFCFVLLFVWSRGRGQHKNNFSVEYSFRKVDGPAAAAGQGGARKFNMKMI.

An N-terminal signal peptide occupies residues 1–24; that stretch reads MTCWLCVLSLPLLLLPAAPPPAGG. The region spanning 25 to 54 is the LRRNT domain; sequence CPARCECTVQTRAVACTRRRLTAVPDGIPA. The Extracellular segment spans residues 25-531; it reads CPARCECTVQ…LDLTTILVST (507 aa). LRR repeat units lie at residues 55 to 76, 79 to 100, 103 to 124, 127 to 148, 151 to 172, 175 to 196, 207 to 228, 247 to 268, 271 to 292, 295 to 316, and 319 to 340; these read ETRLLELSRNRIRCLNPGDLAA, ALEELDLSENAIAHVEPGAFAN, RLRVLRLRGNQLKLIPPGVFTR, NLTLLDLSENKLVILLDYTFQD, SLRRLEVGDNDLVFVSRRAFAG, ALEELTLERCNLTALSGESLGH, HLAIASLEDQNFRRLPGLLHLE, NLTSLSVTHTNITAVPAAALRH, HLTCLNLSHNPISTVPRGSFRD, RLRELHLAGALLAVVEPQAFLG, and QIRLLNLSNNLLSTLEESTFHS. The N-linked (GlcNAc...) asparagine glycan is linked to Asn127. A glycan (N-linked (GlcNAc...) asparagine) is linked at Asn185. 3 N-linked (GlcNAc...) asparagine glycosylation sites follow: Asn247, Asn257, and Asn276. The N-linked (GlcNAc...) asparagine glycan is linked to Asn324. One can recognise an LRRCT domain in the interval 352-406; sequence NPLACDCRLLWIVQRRKTLNFDGRLPACATPAEVRGDALRNLPDSVLFEYFVCRK. The region spanning 407 to 496 is the Ig-like C2-type domain; it reads PKIRERRLQR…GNDTYFATLT (90 aa). Residues Cys429 and Cys480 are joined by a disulfide bond. N-linked (GlcNAc...) asparagine glycans are attached at residues Asn488 and Asn512. The chain crosses the membrane as a helical span at residues 532–552; sequence AMGCITFLGVVLFCFVLLFVW. Over 553–592 the chain is Cytoplasmic; that stretch reads SRGRGQHKNNFSVEYSFRKVDGPAAAAGQGGARKFNMKMI.

The protein localises to the membrane. The polypeptide is Leucine-rich repeat and immunoglobulin-like domain-containing nogo receptor-interacting protein 3 (LINGO3) (Homo sapiens (Human)).